A 241-amino-acid polypeptide reads, in one-letter code: Accessory protein p30II (241 aa).

Short sequence motifs (nuclear localization signal) lie at residues 73–78 and 91–98; these read RRCRSR and GPRRSRPR. The interval 86 to 153 is disordered; the sequence is AFPPGGPRRS…HRNSPTDTKL (68 aa). The segment covering 107 to 138 has biased composition (low complexity); it reads PSSTVSSSSLSFNSSSKDNSPSTNSSTSRSSG. The short motif at 175 to 184 is the Mitochondrial targeting signal element; the sequence is LRVWRLCTRR.

It belongs to the HTLV-1 accessory protein p30II family. In terms of assembly, p30II binds to the KIX domains of CREBBP and EP300.

It localises to the host nucleus. The protein resides in the host nucleolus. Its subcellular location is the host mitochondrion inner membrane. Functionally, p30II is a multifunctional regulator that sequesters EP300/CREBBP and down-regulates CREB-responsive element (CRE) and Tax-responsive element (TRE) mediated transcription. Specifically binds and represses tax/rex mRNA nuclear export. Since Tax and Rex are positive regulators of viral gene expression, their inhibition by p30II reduces virion production, and allows the virus to escape the host immune surveillance and persist latently in an immune-competent host. In terms of biological role, p13II increases mitochondrial permeability to monovalent cations, producing a rapid, membrane potential-dependent influx of potassium. This could involve a channel-forming activity. Interferes with cell proliferation and transformation and promotes apoptosis induced by ceramide and Fas ligand, probably using the Ras signaling. This chain is Accessory protein p30II, found in Human T-cell leukemia virus 1 (isolate Caribbea HS-35 subtype A) (HTLV-1).